Reading from the N-terminus, the 465-residue chain is UDP-N-acetylmuramate--L-alanine ligase (465 aa).

Residue 112 to 118 participates in ATP binding; that stretch reads GTHGKTT.

Belongs to the MurCDEF family.

It localises to the cytoplasm. The catalysed reaction is UDP-N-acetyl-alpha-D-muramate + L-alanine + ATP = UDP-N-acetyl-alpha-D-muramoyl-L-alanine + ADP + phosphate + H(+). The protein operates within cell wall biogenesis; peptidoglycan biosynthesis. Functionally, cell wall formation. In Burkholderia ambifaria (strain ATCC BAA-244 / DSM 16087 / CCUG 44356 / LMG 19182 / AMMD) (Burkholderia cepacia (strain AMMD)), this protein is UDP-N-acetylmuramate--L-alanine ligase.